The chain runs to 384 residues: 23S rRNA (uracil(747)-C(5))-methyltransferase RlmC (384 aa).

[4Fe-4S] cluster contacts are provided by Cys7, Cys15, Cys18, and Cys94. S-adenosyl-L-methionine is bound by residues Gln219, Phe248, Glu269, and Asn316. The active-site Nucleophile is Cys343.

It belongs to the class I-like SAM-binding methyltransferase superfamily. RNA M5U methyltransferase family. RlmC subfamily.

It carries out the reaction uridine(747) in 23S rRNA + S-adenosyl-L-methionine = 5-methyluridine(747) in 23S rRNA + S-adenosyl-L-homocysteine + H(+). Its function is as follows. Catalyzes the formation of 5-methyl-uridine at position 747 (m5U747) in 23S rRNA. This Shewanella sp. (strain MR-7) protein is 23S rRNA (uracil(747)-C(5))-methyltransferase RlmC.